A 245-amino-acid polypeptide reads, in one-letter code: tRNA (guanine-N(1)-)-methyltransferase (245 aa).

S-adenosyl-L-methionine is bound by residues Gly-111 and Met-131 to Leu-136.

It belongs to the RNA methyltransferase TrmD family. In terms of assembly, homodimer.

The protein localises to the cytoplasm. The catalysed reaction is guanosine(37) in tRNA + S-adenosyl-L-methionine = N(1)-methylguanosine(37) in tRNA + S-adenosyl-L-homocysteine + H(+). In terms of biological role, specifically methylates guanosine-37 in various tRNAs. The protein is tRNA (guanine-N(1)-)-methyltransferase of Staphylococcus aureus (strain USA300).